The chain runs to 266 residues: F-box/kelch-repeat protein At4g39560 (266 aa).

An F-box domain is found at 24 to 70 (STQILSLPVDLLISILARVSRLDYPILSLVSKSFRSLIASPELYETR). 3 Kelch repeats span residues 130 to 176 (DIYN…VIDG), 178 to 223 (IYVA…KSAV), and 226 to 266 (EAIC…LLVA).

The polypeptide is F-box/kelch-repeat protein At4g39560 (Arabidopsis thaliana (Mouse-ear cress)).